The following is a 118-amino-acid chain: V-type proton ATPase subunit G 2 (118 aa).

Positions Ala-23–Arg-90 are disordered. Over residues Gln-35–Phe-55 the composition is skewed to basic and acidic residues. Composition is skewed to polar residues over residues Gln-56–Leu-69 and Arg-78–Gln-89.

The protein belongs to the V-ATPase G subunit family. V-ATPase is a heteromultimeric enzyme made up of two complexes: the ATP-hydrolytic V1 complex and the proton translocation V0 complex. The V1 complex consists of three catalytic AB heterodimers that form a heterohexamer, three peripheral stalks each consisting of EG heterodimers, one central rotor including subunits D and F, and the regulatory subunits C and H. The proton translocation complex V0 consists of the proton transport subunit a, a ring of proteolipid subunits c9c'', rotary subunit d, subunits e and f, and the accessory subunits ATP6AP1/Ac45 and ATP6AP2/PRR.

The protein localises to the melanosome. It localises to the cytoplasmic vesicle. The protein resides in the clathrin-coated vesicle membrane. In terms of biological role, subunit of the V1 complex of vacuolar(H+)-ATPase (V-ATPase), a multisubunit enzyme composed of a peripheral complex (V1) that hydrolyzes ATP and a membrane integral complex (V0) that translocates protons. V-ATPase is responsible for acidifying and maintaining the pH of intracellular compartments and in some cell types, is targeted to the plasma membrane, where it is responsible for acidifying the extracellular environment. The sequence is that of V-type proton ATPase subunit G 2 (ATP6V1G2) from Macaca mulatta (Rhesus macaque).